Here is a 109-residue protein sequence, read N- to C-terminus: Aquaporin-2 (109 aa).

Residues 1-6 (SIAFSR) lie on the Cytoplasmic side of the membrane. The chain crosses the membrane as a helical span at residues 7 to 27 (AVLSEFLATLLFVFFGLGSAL). Residues 28-35 (NWPQALPS) are Extracellular-facing. A helical membrane pass occupies residues 36–54 (VLQIAMAFGLAIGTLVQTL). Residues 55–59 (GHISG) lie on the Cytoplasmic side of the membrane. An intramembrane region (discontinuously helical) is located at residues 60-69 (AHINPAVTIA). The NPA 1 signature appears at 63–65 (NPA). Over 70–80 (CLVGCHVSFLR) the chain is Cytoplasmic. A helical transmembrane segment spans residues 81–102 (ALFYLAAQLLGAVAGAALLHEL). The Extracellular segment spans residues 103-109 (TPPDIRG).

The protein belongs to the MIP/aquaporin (TC 1.A.8) family. In terms of assembly, homotetramer. Serine phosphorylation is necessary and sufficient for expression at the apical membrane. Endocytosis is not phosphorylation-dependent. Post-translationally, N-glycosylated.

The protein localises to the apical cell membrane. The protein resides in the basolateral cell membrane. It is found in the cell membrane. It localises to the cytoplasmic vesicle membrane. Its subcellular location is the golgi apparatus. The protein localises to the trans-Golgi network membrane. It catalyses the reaction H2O(in) = H2O(out). The enzyme catalyses glycerol(in) = glycerol(out). Forms a water-specific channel that provides the plasma membranes of renal collecting duct with high permeability to water, thereby permitting water to move in the direction of an osmotic gradient. Plays an essential role in renal water homeostasis. Could also be permeable to glycerol. The polypeptide is Aquaporin-2 (Procavia capensis habessinica (Abyssinian hyrax)).